A 257-amino-acid polypeptide reads, in one-letter code: tRNA pseudouridine synthase A (257 aa).

Asp43 functions as the Nucleophile in the catalytic mechanism. Residue Tyr94 coordinates substrate.

It belongs to the tRNA pseudouridine synthase TruA family.

The catalysed reaction is uridine(38/39/40) in tRNA = pseudouridine(38/39/40) in tRNA. In terms of biological role, formation of pseudouridine at positions 38, 39 and 40 in the anticodon stem and loop of transfer RNAs. The sequence is that of tRNA pseudouridine synthase A from Pyrobaculum arsenaticum (strain DSM 13514 / JCM 11321 / PZ6).